The following is a 239-amino-acid chain: Leucyl/phenylalanyl-tRNA--protein transferase (239 aa).

Belongs to the L/F-transferase family.

The protein resides in the cytoplasm. It catalyses the reaction N-terminal L-lysyl-[protein] + L-leucyl-tRNA(Leu) = N-terminal L-leucyl-L-lysyl-[protein] + tRNA(Leu) + H(+). It carries out the reaction N-terminal L-arginyl-[protein] + L-leucyl-tRNA(Leu) = N-terminal L-leucyl-L-arginyl-[protein] + tRNA(Leu) + H(+). The catalysed reaction is L-phenylalanyl-tRNA(Phe) + an N-terminal L-alpha-aminoacyl-[protein] = an N-terminal L-phenylalanyl-L-alpha-aminoacyl-[protein] + tRNA(Phe). Functionally, functions in the N-end rule pathway of protein degradation where it conjugates Leu, Phe and, less efficiently, Met from aminoacyl-tRNAs to the N-termini of proteins containing an N-terminal arginine or lysine. This is Leucyl/phenylalanyl-tRNA--protein transferase from Syntrophus aciditrophicus (strain SB).